A 462-amino-acid chain; its full sequence is Cysteine--tRNA ligase (462 aa).

Residue cysteine 27 participates in Zn(2+) binding. The 'HIGH' region signature appears at 29–39 (PTVYDLAHIGN). The Zn(2+) site is built by cysteine 211, histidine 236, and glutamate 240. The short motif at 270–274 (KMSKS) is the 'KMSKS' region element. Lysine 273 contacts ATP.

This sequence belongs to the class-I aminoacyl-tRNA synthetase family. In terms of assembly, monomer. Requires Zn(2+) as cofactor.

The protein resides in the cytoplasm. It catalyses the reaction tRNA(Cys) + L-cysteine + ATP = L-cysteinyl-tRNA(Cys) + AMP + diphosphate. In Anaplasma phagocytophilum (strain HZ), this protein is Cysteine--tRNA ligase.